Here is a 138-residue protein sequence, read N- to C-terminus: Acidic phospholipase A2 VpaPLA2 (138 aa).

The N-terminal stretch at 1-16 (MRTLWIVAVCLMGVEG) is a signal peptide. Cystine bridges form between C42/C131, C44/C60, C59/C111, C65/C138, C66/C104, C73/C97, and C91/C102. Ca(2+) is bound by residues Y43, G45, and G47. The active site involves H63. D64 contributes to the Ca(2+) binding site. The active site involves D105.

The protein belongs to the phospholipase A2 family. Group II subfamily. D49 sub-subfamily. Ca(2+) is required as a cofactor. In terms of tissue distribution, expressed by the venom gland.

The protein resides in the secreted. The enzyme catalyses a 1,2-diacyl-sn-glycero-3-phosphocholine + H2O = a 1-acyl-sn-glycero-3-phosphocholine + a fatty acid + H(+). Snake venom phospholipase A2 (PLA2) that causes a sudden decrease of arterial blood pressure when injected into rat, but is not lethal. When co-injected with an uncharacterized basic protein (which did not show any enzymatic activity, but also causes a drop in blood pressure), this synergistical mixture is lethal. PLA2 catalyzes the calcium-dependent hydrolysis of the 2-acyl groups in 3-sn-phosphoglycerides. This Daboia palaestinae (Palestine viper) protein is Acidic phospholipase A2 VpaPLA2.